We begin with the raw amino-acid sequence, 3298 residues long: Protocadherin-16 (3298 aa).

The first 42 residues, 1–42 (MQKELGIVPSCPGMKSPRPHLLLPLLLLLLLLLGAGVPGAWG), serve as a signal peptide directing secretion. Cadherin domains follow at residues 43-143 (QAGS…APAF), 144-255 (PQAR…APAF), 256-362 (NQSR…QPSM), 367-472 (LSAD…APAF), 474-578 (RQLY…EPQF), 579-685 (QRTF…PPQF), 686-790 (YPRE…PPIF), 791-894 (EQLQ…SPAF), 895-1000 (PAPE…APRF), 1001-1111 (NSPT…DPTF), 1112-1211 (LAVA…SPTF), 1218-1324 (AGGG…PPDL), 1333-1436 (VPVV…APAF), 1437-1546 (ARDP…APVF), 1547-1649 (ASPS…APTF), 1650-1751 (QQQE…APTF), 1752-1855 (GSAH…APAF), 1856-1960 (PVPA…APTF), 1965-2068 (LRLR…GPRF), 2069-2171 (PRAS…APRF), 2172-2277 (LRPH…RPTI), 2278-2376 (PQPW…APAF), 2377-2482 (SQSL…APSF), 2483-2602 (TLSH…PPVF), 2603-2706 (TRAS…GPAF), 2707-2813 (PLNL…DPVF), and 2814-2933 (LAPA…APDL). Topologically, residues 43-2940 (QAGSLDLQID…PDLNLLLVGA (2898 aa)) are extracellular. N-linked (GlcNAc...) asparagine glycosylation is found at Asn217, Asn256, and Asn402. N-linked (GlcNAc...) asparagine glycosylation is present at Asn584. The N-linked (GlcNAc...) asparagine glycan is linked to Asn1249. N-linked (GlcNAc...) asparagine glycosylation occurs at Asn1521. An N-linked (GlcNAc...) asparagine glycan is attached at Asn1718. An N-linked (GlcNAc...) asparagine glycan is attached at Asn1996. Residues 2065-2094 (GPRFPRASSEATIRENAPPGTPIVSPRAVH) form a disordered region. Residues Asn2361, Asn2428, and Asn2569 are each glycosylated (N-linked (GlcNAc...) asparagine). N-linked (GlcNAc...) asparagine glycosylation is found at Asn2761, Asn2792, and Asn2862. The helical transmembrane segment at 2941–2961 (VAASLGVVVVLALAALVLGLV) threads the bilayer. Residues 2962 to 3298 (RARSRKAEAA…EPPDDTELHI (337 aa)) are Cytoplasmic-facing. Residues 2986-3040 (LQKLGREPPSPPPSEHLYHQTLPSYGGPGAGGPYPRGGSLDPSHSSGRGSAEAAE) form a disordered region. Over residues 3011–3020 (GGPGAGGPYP) the composition is skewed to gly residues. The residue at position 3055 (Ser3055) is a Phosphoserine. Disordered regions lie at residues 3062–3082 (ARGPDSGIQQDADGLSDTSCE) and 3233–3298 (ASHR…ELHI). Low complexity-rich tracts occupy residues 3244–3266 (SLSSAAMSPSFSPSLSPLAARSP) and 3276–3289 (GPSASALSAESGLE).

In terms of assembly, heterophilic interaction with FAT4; this interaction affects their respective protein levels. Expressed in fibroblasts but not in melanocytes or keratinocytes.

It is found in the cell membrane. Calcium-dependent cell-adhesion protein. Mediates functions in neuroprogenitor cell proliferation and differentiation. In the heart, has a critical role for proper morphogenesis of the mitral valve, acting in the regulation of cell migration involved in valve formation. The polypeptide is Protocadherin-16 (DCHS1) (Homo sapiens (Human)).